The following is a 605-amino-acid chain: Formin-binding protein 1-like (605 aa).

Residues 1–263 (MSWGTELWDQ…AAKSVDERRD (263 aa)) enclose the F-BAR domain. The stretch at 66 to 258 (FTSCVAFFNI…EGMILAAKSV (193 aa)) forms a coiled coil. The segment at 245–535 (SKCLEGMILA…EFDDEFEDDD (291 aa)) is interaction with CDC42. Position 295 is a phosphoserine (S295). Residues 392–484 (LEDFSHLPPE…VEGKTGGRGD (93 aa)) are a coiled coil. The REM-1 domain occupies 397–474 (HLPPEQRRKK…IHKNEAWLSE (78 aa)). The span at 476-490 (EGKTGGRGDRRHSSD) shows a compositional bias: basic and acidic residues. The disordered stretch occupies residues 476–539 (EGKTGGRGDR…EFEDDDPLPA (64 aa)). S488, S501, and S505 each carry phosphoserine. The segment at 522-605 (GHHNEFDDEF…VTLEKNSKGS (84 aa)) is interaction with DNM1. Residues 527–536 (FDDEFEDDDP) are compositionally biased toward acidic residues. The SH3 domain occupies 538-599 (PAIGHCKAIY…PTSYIDVTLE (62 aa)). The segment at 541 to 597 (GHCKAIYPFDGHNEGTLAMKEGEVLYIIEEDKGDGWTRARRQNGEEGYVPTSYIDVT) is interaction with DNM2 and WASL. Residues 541 to 605 (GHCKAIYPFD…VTLEKNSKGS (65 aa)) are interaction with DAAM1, DIAPH1 and DIAPH2.

Belongs to the FNBP1 family. In terms of assembly, homodimerizes, the dimers can polymerize end-to-end to form filamentous structures. Interacts with GTP-bound CDC42. Interacts with DAAM1, DIAPH1, DIAPH2, DNM1, DNM2 and WASL/N-WASP. Interacts with ATG3. Interacts (via SH3 domain) with ABI1, WASF2, CDC42 and WIPF1.

It is found in the cytoplasm. Its subcellular location is the cytoskeleton. It localises to the cell cortex. The protein resides in the cytoplasmic vesicle. The protein localises to the cell membrane. In terms of biological role, required to coordinate membrane tubulation with reorganization of the actin cytoskeleton during endocytosis. May bind to lipids such as phosphatidylinositol 4,5-bisphosphate and phosphatidylserine and promote membrane invagination and the formation of tubules. Also promotes CDC42-induced actin polymerization by activating the WASL/N-WASP-WASPIP/WIP complex, the predominant form of WASL/N-WASP in cells. Actin polymerization may promote the fission of membrane tubules to form endocytic vesicles. Essential for autophagy of intracellular bacterial pathogens. This chain is Formin-binding protein 1-like (FNBP1L), found in Homo sapiens (Human).